Here is a 307-residue protein sequence, read N- to C-terminus: Transcription initiation factor IIB 2 (307 aa).

The TFIIB-type zinc finger occupies 7 to 38 (TPKRCPECNSEHLIRDYEHGELICADCGAVIE). Residues Cys11, Cys14, Cys30, and Cys33 each contribute to the Zn(2+) site. 2 repeat units span residues 124 to 207 (QLLN…AKEL) and 218 to 299 (SYIS…EISK).

It belongs to the TFIIB family.

Its function is as follows. Stabilizes TBP binding to an archaeal box-A promoter. Also responsible for recruiting RNA polymerase II to the pre-initiation complex (DNA-TBP-TFIIB). The polypeptide is Transcription initiation factor IIB 2 (Thermoplasma acidophilum (strain ATCC 25905 / DSM 1728 / JCM 9062 / NBRC 15155 / AMRC-C165)).